Here is a 455-residue protein sequence, read N- to C-terminus: Gamma-glutamyl phosphate reductase (455 aa).

This sequence belongs to the gamma-glutamyl phosphate reductase family.

It localises to the cytoplasm. The enzyme catalyses L-glutamate 5-semialdehyde + phosphate + NADP(+) = L-glutamyl 5-phosphate + NADPH + H(+). Its pathway is amino-acid biosynthesis; L-proline biosynthesis; L-glutamate 5-semialdehyde from L-glutamate: step 2/2. Its function is as follows. Catalyzes the NADPH-dependent reduction of L-glutamate 5-phosphate into L-glutamate 5-semialdehyde and phosphate. The product spontaneously undergoes cyclization to form 1-pyrroline-5-carboxylate. The polypeptide is Gamma-glutamyl phosphate reductase (Synechococcus sp. (strain JA-2-3B'a(2-13)) (Cyanobacteria bacterium Yellowstone B-Prime)).